Reading from the N-terminus, the 196-residue chain is Thymidine kinase (196 aa).

ATP-binding positions include 9-16 and 88-91; these read SAMNAGKS and DEAQ. Catalysis depends on glutamate 89, which acts as the Proton acceptor. Zn(2+)-binding residues include cysteine 146, cysteine 148, cysteine 183, and histidine 186.

This sequence belongs to the thymidine kinase family. As to quaternary structure, homotetramer.

Its subcellular location is the cytoplasm. The catalysed reaction is thymidine + ATP = dTMP + ADP + H(+). This is Thymidine kinase from Coxiella burnetii (strain RSA 493 / Nine Mile phase I).